The primary structure comprises 224 residues: Extracellular protease inhibitor 10 (224 aa).

The first 22 residues, 1-22 (MKSAFTLSLALVAVTATISAAA), serve as a signal peptide directing secretion. Kazal-like domains follow at residues 23–72 (DDNC…ECAS), 90–127 (TSGTVGCPDMCLDVYDPVSDENGKEYSNQCYMEMAKCK), and 156–210 (GYQG…PCPS). Asparagine 25 is a glycosylation site (N-linked (GlcNAc...) asparagine). Disulfide bonds link cysteine 26-cysteine 56, cysteine 30-cysteine 49, and cysteine 38-cysteine 70. Positions 69-92 (ECASTPASSATPSPVTSSTGSTSG) are disordered. Positions 71 to 92 (ASTPASSATPSPVTSSTGSTSG) are enriched in low complexity. Intrachain disulfides connect cysteine 96–cysteine 126, cysteine 100–cysteine 119, cysteine 162–cysteine 193, cysteine 167–cysteine 186, and cysteine 175–cysteine 208. Asparagine 199 is a glycosylation site (N-linked (GlcNAc...) asparagine). Positions 202–224 (MVGEGPCPSQEQQQQQQQQQQKL) are disordered. Low complexity predominate over residues 211-224 (QEQQQQQQQQQQKL).

As to quaternary structure, interacts with host subtilisin-like protease P69B.

The protein localises to the secreted. Functionally, secreted effector that interacts with and inhibits the pathogenesis-related P69B subtilisin-like serine protease of host tomato. Inhibition of host proteases by a pathogen extracellular protease inhibitor forms a specific type of defense-counterdefense mechanism between plants and microbial pathogens. This Phytophthora infestans (Potato late blight agent) protein is Extracellular protease inhibitor 10.